Consider the following 288-residue polypeptide: ATP synthase gamma chain (288 aa).

This sequence belongs to the ATPase gamma chain family. As to quaternary structure, F-type ATPases have 2 components, CF(1) - the catalytic core - and CF(0) - the membrane proton channel. CF(1) has five subunits: alpha(3), beta(3), gamma(1), delta(1), epsilon(1). CF(0) has three main subunits: a, b and c.

Its subcellular location is the cell inner membrane. Functionally, produces ATP from ADP in the presence of a proton gradient across the membrane. The gamma chain is believed to be important in regulating ATPase activity and the flow of protons through the CF(0) complex. The polypeptide is ATP synthase gamma chain (Laribacter hongkongensis (strain HLHK9)).